The primary structure comprises 107 residues: UPF0060 membrane protein M446_5886 (107 aa).

The next 4 membrane-spanning stretches (helical) occupy residues 4-24 (LLAYALAALAEIAGCFAIWAW), 31-51 (PLWLGPGLASLILFAVLLTRV), 59-79 (AYAAYGGVYVAASLLWLWAAE), and 85-105 (RWDLGGAALCLAGSAVVLLGP).

The protein belongs to the UPF0060 family.

The protein localises to the cell inner membrane. In Methylobacterium sp. (strain 4-46), this protein is UPF0060 membrane protein M446_5886.